The following is a 409-amino-acid chain: Serine/threonine transporter SstT (409 aa).

A run of 9 helical transmembrane segments spans residues 17–37 (LVVQIIVGLVAGLLLASFFPA), 49–69 (FVSALKAVAPVLVFVLVMASI), 83–103 (ILLLYLVGTFSAAVVAVIASF), 142–162 (ALISANFIGILAWAIGLGIAF), 180–200 (VSLIVKVVIRFAPLGIFGLVA), 218–238 (LVVLLGCMLFVAFVVNPLIVF), 299–319 (MAGAAITITVLTLAAVHTLGI), 331–351 (VVASVCACGASGVAGGSLLLI), and 357–377 (LFGIPSEVAMQVVAVGFIIAI).

This sequence belongs to the dicarboxylate/amino acid:cation symporter (DAACS) (TC 2.A.23) family.

The protein localises to the cell inner membrane. It carries out the reaction L-serine(in) + Na(+)(in) = L-serine(out) + Na(+)(out). The catalysed reaction is L-threonine(in) + Na(+)(in) = L-threonine(out) + Na(+)(out). Its function is as follows. Involved in the import of serine and threonine into the cell, with the concomitant import of sodium (symport system). This is Serine/threonine transporter SstT from Pseudomonas paraeruginosa (strain DSM 24068 / PA7) (Pseudomonas aeruginosa (strain PA7)).